Here is a 481-residue protein sequence, read N- to C-terminus: Bifunctional protein HldE (481 aa).

The ribokinase stretch occupies residues 1-318 (MKVTLPDFRR…ENAIRGRAET (318 aa)). 195 to 198 (NLSE) provides a ligand contact to ATP. Aspartate 264 is an active-site residue. Positions 344 to 481 (MTNGIFDILH…KRRAGQRTVV (138 aa)) are cytidylyltransferase.

The protein in the N-terminal section; belongs to the carbohydrate kinase PfkB family. In the C-terminal section; belongs to the cytidylyltransferase family. Homodimer.

The enzyme catalyses D-glycero-beta-D-manno-heptose 7-phosphate + ATP = D-glycero-beta-D-manno-heptose 1,7-bisphosphate + ADP + H(+). The catalysed reaction is D-glycero-beta-D-manno-heptose 1-phosphate + ATP + H(+) = ADP-D-glycero-beta-D-manno-heptose + diphosphate. The protein operates within nucleotide-sugar biosynthesis; ADP-L-glycero-beta-D-manno-heptose biosynthesis; ADP-L-glycero-beta-D-manno-heptose from D-glycero-beta-D-manno-heptose 7-phosphate: step 1/4. It functions in the pathway nucleotide-sugar biosynthesis; ADP-L-glycero-beta-D-manno-heptose biosynthesis; ADP-L-glycero-beta-D-manno-heptose from D-glycero-beta-D-manno-heptose 7-phosphate: step 3/4. Catalyzes the phosphorylation of D-glycero-D-manno-heptose 7-phosphate at the C-1 position to selectively form D-glycero-beta-D-manno-heptose-1,7-bisphosphate. Its function is as follows. Catalyzes the ADP transfer from ATP to D-glycero-beta-D-manno-heptose 1-phosphate, yielding ADP-D-glycero-beta-D-manno-heptose. In Sodalis glossinidius (strain morsitans), this protein is Bifunctional protein HldE.